A 409-amino-acid chain; its full sequence is uncharacterized protein (409 aa).

A signal peptide spans Met-1–Ala-26.

This is an uncharacterized protein from Bacillus subtilis (strain 168).